Consider the following 397-residue polypeptide: Phosphoglycerate kinase (397 aa).

Substrate contacts are provided by residues 21 to 23, Arg-37, 60 to 63, Arg-119, and Arg-152; these read DFN and HLGR. ATP is bound by residues Lys-203, Gly-294, Glu-325, and 354–357; that span reads GGDS.

The protein belongs to the phosphoglycerate kinase family. Monomer.

The protein localises to the cytoplasm. The catalysed reaction is (2R)-3-phosphoglycerate + ATP = (2R)-3-phospho-glyceroyl phosphate + ADP. The protein operates within carbohydrate degradation; glycolysis; pyruvate from D-glyceraldehyde 3-phosphate: step 2/5. In Prosthecochloris aestuarii (strain DSM 271 / SK 413), this protein is Phosphoglycerate kinase.